The following is a 216-amino-acid chain: NKG2-D type II integral membrane protein (216 aa).

The Cytoplasmic segment spans residues 1–51; sequence MGWIRGRRSRHSWEMSEFHNYNLDLAKNDFSTRWQKQRCPVIKSKCRENTS. Residues 52 to 72 form a helical; Signal-anchor for type II membrane protein membrane-spanning segment; sequence PLFFCCFIAVAMGIRFIVMVT. The Extracellular portion of the chain corresponds to 73-216; that stretch reads IWSAVFLNSL…NTYICMQRTV (144 aa). Cystine bridges form between Cys-96–Cys-105 and Cys-99–Cys-110. The region spanning 98–213 is the C-type lectin domain; that stretch reads PCPKNWICYK…STPNTYICMQ (116 aa). Residues Asn-115, Asn-131, Asn-163, and Asn-202 are each glycosylated (N-linked (GlcNAc...) asparagine). Disulfide bonds link Cys-127–Cys-211 and Cys-189–Cys-203.

In terms of assembly, homodimer; disulfide-linked. Heterohexamer composed of two subunits of KLRK1 and four subunits of HCST/DAP10. Interacts (via transmembrane domain) with HCST/DAP10 (via transmembrane domain); the interaction is required for KLRK1 NK cell surface and induces NK cell-mediated cytotoxicity. Can form disulfide-bonded heterodimer with CD94. Interacts with CEACAM1; recruits PTPN6 that dephosphorylates VAV1.

The protein resides in the cell membrane. Functions as an activating and costimulatory receptor involved in immunosurveillance upon binding to various cellular stress-inducible ligands displayed at the surface of autologous tumor cells and virus-infected cells. Provides both stimulatory and costimulatory innate immune responses on activated killer (NK) cells, leading to cytotoxic activity. Acts as a costimulatory receptor for T-cell receptor (TCR) in CD8(+) T-cell-mediated adaptive immune responses by amplifying T-cell activation. Stimulates perforin-mediated elimination of ligand-expressing tumor cells. Signaling involves calcium influx, culminating in the expression of TNF-alpha. Participates in NK cell-mediated bone marrow graft rejection. May play a regulatory role in differentiation and survival of NK cells. Binds to ligands belonging to various subfamilies of MHC class I-related glycoproteins. In Pongo pygmaeus (Bornean orangutan), this protein is NKG2-D type II integral membrane protein (KLRK1).